Here is a 361-residue protein sequence, read N- to C-terminus: Cyclin-D3-3 (361 aa).

It belongs to the cyclin family. Cyclin D subfamily.

Promotes divisions in the guard cells (GCs) after the guard mother cells (GMC) symmetric division. In Arabidopsis thaliana (Mouse-ear cress), this protein is Cyclin-D3-3 (CYCD3-3).